The primary structure comprises 418 residues: Tyrosine--tRNA ligase (418 aa).

L-tyrosine is bound at residue tyrosine 34. A 'HIGH' region motif is present at residues 39-48; that stretch reads PTADSLHLGH. Tyrosine 169 and glutamine 173 together coordinate L-tyrosine. The 'KMSKS' region signature appears at 229–233; the sequence is KFGKS. An ATP-binding site is contributed by lysine 232. The 67-residue stretch at 352–418 folds into the S4 RNA-binding domain; the sequence is LNLVDMLVTA…GKKKYAVLTY (67 aa).

This sequence belongs to the class-I aminoacyl-tRNA synthetase family. TyrS type 1 subfamily. In terms of assembly, homodimer.

Its subcellular location is the cytoplasm. It carries out the reaction tRNA(Tyr) + L-tyrosine + ATP = L-tyrosyl-tRNA(Tyr) + AMP + diphosphate + H(+). Its function is as follows. Catalyzes the attachment of tyrosine to tRNA(Tyr) in a two-step reaction: tyrosine is first activated by ATP to form Tyr-AMP and then transferred to the acceptor end of tRNA(Tyr). In Streptococcus pyogenes serotype M5 (strain Manfredo), this protein is Tyrosine--tRNA ligase.